The following is a 206-amino-acid chain: LexA repressor (206 aa).

Positions 28-48 (RAEIATRLGFKSANAAEEHLK) form a DNA-binding region, H-T-H motif. Catalysis depends on for autocatalytic cleavage activity residues Ser123 and Lys160.

This sequence belongs to the peptidase S24 family. In terms of assembly, homodimer.

The catalysed reaction is Hydrolysis of Ala-|-Gly bond in repressor LexA.. In terms of biological role, represses a number of genes involved in the response to DNA damage (SOS response), including recA and lexA. In the presence of single-stranded DNA, RecA interacts with LexA causing an autocatalytic cleavage which disrupts the DNA-binding part of LexA, leading to derepression of the SOS regulon and eventually DNA repair. The sequence is that of LexA repressor from Shewanella sp. (strain MR-4).